The chain runs to 97 residues: RxLR effector protein CRE10 (97 aa).

An N-terminal signal peptide occupies residues 1–21; it reads MRLSYILVVVIAVTLQACVCA. The RxLR-dEER signature appears at 48 to 66; the sequence is RLLRGVKKRTAEREVQEER.

This sequence belongs to the RxLR effector family.

Its subcellular location is the secreted. The protein resides in the host cell. Functionally, effector that is involved in host plant infection. Contributes to virulence during the early infection stage, by inhibiting plant defense responses induced by both PAMP-triggered immunity (PTI) and effector-triggered immunity (ETI). This is RxLR effector protein CRE10 from Phytophthora infestans (strain T30-4) (Potato late blight agent).